Consider the following 196-residue polypeptide: ATP-dependent Clp protease proteolytic subunit (196 aa).

Catalysis depends on Ser-96, which acts as the Nucleophile. The active site involves His-121.

Belongs to the peptidase S14 family. In terms of assembly, fourteen ClpP subunits assemble into 2 heptameric rings which stack back to back to give a disk-like structure with a central cavity, resembling the structure of eukaryotic proteasomes.

The protein resides in the cytoplasm. The catalysed reaction is Hydrolysis of proteins to small peptides in the presence of ATP and magnesium. alpha-casein is the usual test substrate. In the absence of ATP, only oligopeptides shorter than five residues are hydrolyzed (such as succinyl-Leu-Tyr-|-NHMec, and Leu-Tyr-Leu-|-Tyr-Trp, in which cleavage of the -Tyr-|-Leu- and -Tyr-|-Trp bonds also occurs).. Functionally, cleaves peptides in various proteins in a process that requires ATP hydrolysis. Has a chymotrypsin-like activity. Plays a major role in the degradation of misfolded proteins. The chain is ATP-dependent Clp protease proteolytic subunit from Streptococcus pneumoniae (strain 70585).